The primary structure comprises 236 residues: MNVSVPLPSGGTMTEPDFSVLRQSMIAEIAAKTAFVSTQLGKAVLDPRVMNAMAKVPRHEFVLLELRPYAYADTPLPSCFDKTISQPFIVAVMTDLLELRPTDTVLEIGTGLGYQTAILAELAQHVYSIEIIEEMAVQARQRLARHGYTNVDIKIGNGCGGWPEHAPFDKVIVTAAPDLIPPPLIYQLKPGGKMVIPAGLPNDQQLILVEKDASDAVSTRDILPVRFSLLEDAEPG.

The active site involves Ser-85.

This sequence belongs to the methyltransferase superfamily. L-isoaspartyl/D-aspartyl protein methyltransferase family.

It is found in the cytoplasm. It carries out the reaction [protein]-L-isoaspartate + S-adenosyl-L-methionine = [protein]-L-isoaspartate alpha-methyl ester + S-adenosyl-L-homocysteine. In terms of biological role, catalyzes the methyl esterification of L-isoaspartyl residues in peptides and proteins that result from spontaneous decomposition of normal L-aspartyl and L-asparaginyl residues. It plays a role in the repair and/or degradation of damaged proteins. This chain is Protein-L-isoaspartate O-methyltransferase 1, found in Polaromonas sp. (strain JS666 / ATCC BAA-500).